A 192-amino-acid chain; its full sequence is Ribosomal RNA small subunit methyltransferase G (192 aa).

S-adenosyl-L-methionine contacts are provided by residues Gly-63, Phe-68, 112–113 (IE), and Arg-125.

This sequence belongs to the methyltransferase superfamily. RNA methyltransferase RsmG family.

The protein localises to the cytoplasm. The enzyme catalyses guanosine(527) in 16S rRNA + S-adenosyl-L-methionine = N(7)-methylguanosine(527) in 16S rRNA + S-adenosyl-L-homocysteine. Functionally, specifically methylates the N7 position of guanine in position 527 of 16S rRNA. The protein is Ribosomal RNA small subunit methyltransferase G of Rickettsia bellii (strain OSU 85-389).